The chain runs to 486 residues: Glutamyl-tRNA(Gln) amidotransferase subunit A (486 aa).

Active-site charge relay system residues include Lys-79 and Ser-154. Ser-178 acts as the Acyl-ester intermediate in catalysis.

The protein belongs to the amidase family. GatA subfamily. As to quaternary structure, heterotrimer of A, B and C subunits.

The catalysed reaction is L-glutamyl-tRNA(Gln) + L-glutamine + ATP + H2O = L-glutaminyl-tRNA(Gln) + L-glutamate + ADP + phosphate + H(+). Its function is as follows. Allows the formation of correctly charged Gln-tRNA(Gln) through the transamidation of misacylated Glu-tRNA(Gln) in organisms which lack glutaminyl-tRNA synthetase. The reaction takes place in the presence of glutamine and ATP through an activated gamma-phospho-Glu-tRNA(Gln). The protein is Glutamyl-tRNA(Gln) amidotransferase subunit A of Dehalococcoides mccartyi (strain CBDB1).